A 229-amino-acid chain; its full sequence is Large ribosomal subunit protein uL1 (229 aa).

It belongs to the universal ribosomal protein uL1 family. As to quaternary structure, part of the 50S ribosomal subunit.

In terms of biological role, binds directly to 23S rRNA. The L1 stalk is quite mobile in the ribosome, and is involved in E site tRNA release. Protein L1 is also a translational repressor protein, it controls the translation of the L11 operon by binding to its mRNA. This Magnetococcus marinus (strain ATCC BAA-1437 / JCM 17883 / MC-1) protein is Large ribosomal subunit protein uL1.